The sequence spans 360 residues: Heat-inducible transcription repressor HrcA (360 aa).

This sequence belongs to the HrcA family.

Its function is as follows. Negative regulator of class I heat shock genes (grpE-dnaK-dnaJ and groELS operons). Prevents heat-shock induction of these operons. The sequence is that of Heat-inducible transcription repressor HrcA from Streptococcus thermophilus (strain CNRZ 1066).